The chain runs to 1040 residues: Multidrug resistance protein MdtB (1040 aa).

11 helical membrane-spanning segments follow: residues 15–37 (LFIMRPVATTLLMVAILLAGIIG), 345–362 (FELMMAIALVVMIIYLFL), 367–389 (ATIIPGVAVPLSLIGTFAVMVFL), 396–418 (LTLMALTIATGFVVDDAIVVIEN), 438–460 (GEIGFTIISLTFSLIAVLIPLLF), 472–494 (FAITLAVAILISAVVSLTLTPMM), 535–557 (HPWLTLSVALSTLLLSVLLWVFI), 867–889 (VWLIVAAVVAMYIVLGILYESFI), 909–931 (LMIAGSELDVIAIIGIILLIGIV), 968–990 (ILMTTLAALLGALPLMLSTGVGA), and 1000–1022 (MVGGLIVSQVLTLFTTPVIYLLF).

It belongs to the resistance-nodulation-cell division (RND) (TC 2.A.6) family. MdtB subfamily. Part of a tripartite efflux system composed of MdtA, MdtB and MdtC. MdtB forms a heteromultimer with MdtC.

It localises to the cell inner membrane. In terms of biological role, the MdtABC tripartite complex confers resistance against novobiocin and deoxycholate. The protein is Multidrug resistance protein MdtB of Escherichia coli O157:H7.